We begin with the raw amino-acid sequence, 353 residues long: Hydrazine synthase subunit gamma (353 aa).

Residues 1 to 39 form the signal peptide; that stretch reads MAREMRLGGKERMKTGVVKIGLVAALGVVGLISAGGVYA. 3 residues coordinate heme c: cysteine 102, cysteine 105, and histidine 106. Residues aspartate 118, leucine 119, glutamate 122, glycine 123, serine 126, asparagine 129, leucine 139, and proline 141 each coordinate Ca(2+). Positions 165, 225, 228, and 229 each coordinate heme c. One can recognise a Cytochrome c domain in the interval 209 to 353; the sequence is EAQKRGQKIF…QDLVEYLKAL (145 aa). Positions 296, 306, 307, and 308 each coordinate Ca(2+). Histidine 332 contacts heme c.

In terms of assembly, part of the hydrazine synthase complex that forms an elongated dimer of heterotrimers composed of one alpha, one beta and one gamma subunit. Requires heme c as cofactor.

It is found in the anammoxosome. It catalyses the reaction hydrazine + 3 Fe(III)-[cytochrome c] + H2O = nitric oxide + 3 Fe(II)-[cytochrome c] + NH4(+) + 2 H(+). Its pathway is nitrogen metabolism. Its function is as follows. Component of the hydrazine synthase complex that catalyzes the condensation of nitric oxide (NO) with ammonium to form hydrazine. The gamma subunit catalyzes the first half-reaction, i.e. the three-electron reduction of nitric oxide to hydroxylamine; it may obtain electrons from the triheme cytochrome c kuste2854. Is involved in anaerobic ammonium oxidation (anammox), a biological process in which nitrite is used as the electron acceptor in the conversion of ammonium to dinitrogen gas (N2) and water; this bacterial process has a major role in the Earth's nitrogen cycle and has been estimated to synthesize up to 50% of the dinitrogen gas emitted into our atmosphere from the oceans. The sequence is that of Hydrazine synthase subunit gamma from Kuenenia stuttgartiensis.